The sequence spans 162 residues: Large ribosomal subunit protein bL17 (162 aa).

The segment at 118 to 162 (RAPAAAPEAEEKGEKKAAGKAEKAPKAAKAPKAEKKPAKKAAKAE) is disordered. The span at 126–162 (AEEKGEKKAAGKAEKAPKAAKAPKAEKKPAKKAAKAE) shows a compositional bias: basic and acidic residues.

The protein belongs to the bacterial ribosomal protein bL17 family. Part of the 50S ribosomal subunit. Contacts protein L32.

In Anaeromyxobacter dehalogenans (strain 2CP-C), this protein is Large ribosomal subunit protein bL17.